A 598-amino-acid chain; its full sequence is UvrABC system protein C (598 aa).

The GIY-YIG domain occupies 14–91; sequence DSPGCYLHKD…IQKNMPKYNI (78 aa). A UVR domain is found at 196–231; that stretch reads DKIIEDLRSKMLAASEEMAFERAAEYRDLISGIATM.

The protein belongs to the UvrC family. As to quaternary structure, interacts with UvrB in an incision complex.

Its subcellular location is the cytoplasm. Functionally, the UvrABC repair system catalyzes the recognition and processing of DNA lesions. UvrC both incises the 5' and 3' sides of the lesion. The N-terminal half is responsible for the 3' incision and the C-terminal half is responsible for the 5' incision. The chain is UvrABC system protein C from Streptococcus pyogenes serotype M28 (strain MGAS6180).